We begin with the raw amino-acid sequence, 2812 residues long: MTSLNDIVNKLSSSKIKTRSDALQNLRSYIIYSRNGNSLNQEDALIIEKAIKRAFELEWQISANHGKRQISKASQEQKLQDISYLLRTCVESYILLFREPHILALLDIILRHTFTANGSICEVVCLNFSKALRLLLSHSPHLHHLRFSDWQSLVSYCCQAIEKLSIAEETYVSDSEEEPISQKNYQEISIWKSHDVIRVKQEVVELIYVMRSLVQWYAAPINFVSEQLLKFFEFFFYAYTEETDAHLPALQCLFQLCAYAIPNCNDYSASVVLLVFKILINSDKWKRLDLRLQLIQCLAISYPLWSNSETWDPHRSIRSFNLDLLNSSFFSLKNFLNFFGKRSSLSLANFRFHTVEPKNNIAKLYDPRLHLFFSLRHNSFFESYFIYFFLAKLILLKKTVLSLASTEQANKKQKTCSQIEELLLQAELANISASSFSLQLMVIITAISDNLTNDDLLSIQKMSLNFTEKKNELQSWSFFILFNICYNKAYSSMLTTSCKKEILAAASRGLLNSVTSPVCYQILTYFNMYRPLCFASIFPFIKQQFILFNDYSPMLSYEAIDYWKSLYILLNENLFVGQSSFKSVFLKWLKWHLYHLFSKEGELPFFSFTDSSIIIFDLLMMIFYRPLSLSYITTEIRSPFERNLFHLKEAWSPVTLRFPYTTDEICKQSTEGCYPFNSNHTIDCDSLQNVIKMLESSIDEISSASYDKDELDKETPSFEAVMIFSQISFLCGFLNCFIQKKGIHNVTPNNLVIFKNLFPEVLSFVKSNHSYDPIINCISTNLQFTISDEPKHLRYEIGSDLIRSTHFRDSNPLKTLVLYIMDMASKNVFIKPQEFDHDEYFSQEEEDIYRPENLIRNHQILGLMEGSLEQIRNTDLFILQKYIDYFSSHPHDSLINILHLYPIETFCFGMSAIGAYFLDVARTSEPIFYKCLEILAQKILMNYDYERDEVYLMIFIKIFQKCVHSKLQFTDATLKLIVKITKFIEKVFIETKFSSLSGRQTFLKFIFQLSPTSHVYSKFDYQKLISLTLKDSDVCVIYNFVDDLVIFLKKCDKTLIEGFVLPILSIKIEKSLYKGFCYLYLTLKVFLSISSNRSALLYQLLKLANSYETSTIFEPLLRKLHIQSANIKQLFRIYRLEIFWSFVSKDLSNTTNDFLEFPYKPIYFSLSDFLKENSDEIILVLILTKNITLAKLITSRMSVDFSEKYTQLIPVITTYTHLSEVENKKYSLRFNSIDEALDVELLNRSKAFLFCLEMLKEVKELGSTFKSISSTSFKVYSQLTIFANRVSFNNSTAIPFFSTKSVLWYCNRLFQELEGFSSIPSVIDLVLRRLAIQLHFATDEELQVTISFRLCAFLCFSDPFITSNYLVMIVLRIARQLLSIPCTQSLGLGIARFHLKKFKPTDFDYFFQLAEFCMDFLGFCYNTIGTKMEAIQDFYTWFDGYVTALLNFEYEGYGFLRCQINFVRSVMTTKNEWIEVSNKLFERGHFLKRIAMNNYLCLYFWQVLDACPRNVLHSLSLEIWKCYKAYDITEFPDSLKLFFSDIMGWNFFKSPEIADLNHYIPKTDPRLCDTKTYEESKLIIWKLICQKACSLLFKYDILLDSFIEDCIRMFFENGNHQELRKFLNFPKDSIIYDSDFKTLVSEEGSFQWVKLQPTNFDSLSNWTKEETLKLLNMMGKSSTTHSLKLLSTYMVGFSTSIIQYIIHLILLEFDFNGNNKKQKEYVTQLILSGLLNKNTNSIRKTCMNILLYLRRQLGHHALNPFEANYWVPINYSVAASTAYDCHLYEQSLLFLTIHNTKTDELDITLLSDILSQLPCPDAYYGIKRETSFKNILLKAVHEKRSPLAISYLDAANMYRSNEDEGTKMMFSNTLNNAGFFSLNEFYIDSLKANDAIDECSNEVYASAWRMQKWDIPPLSLDNKTTKDCLVFEVLHAVHNYAIYGNYLHLEEYINKKLLLINPNEEPDSLLFYALAYDLKFLIRCNQSQFNCDILQLLKENKQMSSQLHECFQLLLEIRNVLLSLLQSHKQLDLSDDLASFRKYYILELLKISESFLIVDNLQNAFSVAMLSDALYRKFDLADENLKHDIDFLSSKILWQRDEKIDAIGMLSESLSKTNSSIFPSISYAYLGNWLYTTKSEKTELVSKNYFEKSLSHMSHLNAKEKAKIYCMFAQFCDNNYSSPDLTEDFKRMEKLYFEKKNDIQQLERSIVNASNMKEEKMLKNHHSREMSSFIIDEREYLRMSTFRSKMLTQSITHYLKCLSESDENDVLISRCCTMWLSNSHLDELNNSLQHYLQNLPCKKFIPVFYQLAARLMNENSKFQQSLTSICYNVGRNHPYHSLHVLFSLVSNVPEIENLDAGSRYRAVKKILDLLKVNQGLSNLVTKLLCSFENYVSLAEWNPRSKVDSTSFSRFPGYKWFLKDAANYGLPPITMNVKVNDTGDYSNIPTVSSFDDTIHFASGINAPKVITCLGSNGHTYKQLVKGGNDDLRQDAVMEQVFEQVNGFLRSYRKTSQRNLSMRTYKVIPLALKTGVIEWVQDTIPLGEYLDSAHKVYHPKEWSLSTCRKLIAEKQMEDLETRLKVYDLVCRHYRPVFRHFFLESYADPVQWFTTQTNYARSTAVASVLGHVLGLGDRHGQNILIDKTSGEVIHIDLGIAFEQGKKLPVPECVPFRLTRDVVDGMGITGVEGVFRRCMEFTLETLRREEDSLLSVLEVLRYDPLFSWLISPLRRMKKQKMQLENFNQPESGNITTDASRDPKIQRNNVSGESEAERAILKVRQKLSSTLSVEASVGELIRIAQDPSYLALMFCGWSAFQ.

Residues 1773-2347 (VAASTAYDCH…LHVLFSLVSN (575 aa)) enclose the FAT domain. The PI3K/PI4K catalytic domain occupies 2449–2758 (FDDTIHFASG…DASRDPKIQR (310 aa)). The G-loop stretch occupies residues 2455 to 2461 (FASGINA). The segment at 2627 to 2635 (GLGDRHGQN) is catalytic loop. Residues 2647–2671 (HIDLGIAFEQGKKLPVPECVPFRLT) form an activation loop region. Residues 2739 to 2749 (NQPESGNITTD) show a composition bias toward polar residues. Residues 2739-2763 (NQPESGNITTDASRDPKIQRNNVSG) form a disordered region. The FATC domain occupies 2780–2812 (STLSVEASVGELIRIAQDPSYLALMFCGWSAFQ).

The protein belongs to the PI3/PI4-kinase family. ATM subfamily. As to quaternary structure, interacts with nbs1. This interaction is required for phosphorylation of histone H2A.

Its subcellular location is the nucleus. It localises to the chromosome. The protein resides in the telomere. It carries out the reaction L-seryl-[protein] + ATP = O-phospho-L-seryl-[protein] + ADP + H(+). It catalyses the reaction L-threonyl-[protein] + ATP = O-phospho-L-threonyl-[protein] + ADP + H(+). Functionally, serine/threonine protein kinase which activates checkpoint signaling upon genotoxic stresses such as ionizing radiation (IR), ultraviolet light (UV), or DNA replication stalling, thereby acting as a DNA damage sensor. Recognizes the substrate consensus sequence [ST]-Q. Phosphorylates histone H2A to form H2AS128ph (gamma-H2A) at sites of DNA damage, involved in the regulation of DNA damage response mechanism. Undirectly involved in the phosphorylation of rad32 which is necessary for its telomere function. Required for the control of telomere length and genome stability. In Schizosaccharomyces pombe (strain 972 / ATCC 24843) (Fission yeast), this protein is Serine/threonine-protein kinase tel1 (tel1).